Here is a 105-residue protein sequence, read N- to C-terminus: UPF0235 protein Mchl_2407 (105 aa).

It belongs to the UPF0235 family.

The polypeptide is UPF0235 protein Mchl_2407 (Methylorubrum extorquens (strain CM4 / NCIMB 13688) (Methylobacterium extorquens)).